Here is a 285-residue protein sequence, read N- to C-terminus: MKVDLGPDPSLVYRPDVDPEMAKSKGSFRNYTSGPLLDRVFTTYKLMHTHQTVDFVMRKRIQFGSFSYKKMTVMEAVDMLDDLVDESDPDVDFPNSFHAFQTAEGIRKAHPDKDWFHLVGLLHDLGKILALWGEPQWAVVGDTFPVGCRPQASVVFCDSTFQDNPDLQDPRYSTELGMYQPHCGLENVLMSWGHDEYLYQMMKFNKFSLPSEAFYMVRFHSFYPWHTGGDYRQLCSQQDLDMLPWVQEFNKFDLYTKCPDLPEVKSLRPYYQGLIDKYCPGILSW.

Arginine 29 is a binding site for substrate. Serine 33 carries the phosphoserine modification. 85-87 (DES) serves as a coordination point for substrate. Positions 98, 123, and 124 each coordinate Fe cation. Residues lysine 127 and 141 to 142 (GD) each bind substrate. The Fe cation site is built by histidine 194, histidine 220, and aspartate 253. Substrate is bound at residue 220–221 (HS).

It belongs to the myo-inositol oxygenase family. Fe cation is required as a cofactor. As to expression, kidney specific.

It is found in the cytoplasm. It catalyses the reaction myo-inositol + O2 = D-glucuronate + H2O + H(+). Its pathway is polyol metabolism; myo-inositol degradation into D-glucuronate; D-glucuronate from myo-inositol: step 1/1. The polypeptide is Inositol oxygenase (Miox) (Rattus norvegicus (Rat)).